The chain runs to 87 residues: Small cysteine-rich outer membrane protein omcA (87 aa).

A signal peptide spans 1 to 19; that stretch reads MKKAVLLATVFCGVVGLTS. Cys20 carries the N-palmitoyl cysteine lipid modification. Residue Cys20 is the site of S-diacylglycerol cysteine attachment.

As to quaternary structure, part of a disulfide cross-linked outer membrane complex (COMC) composed of the major outer membrane porin (MOMP), the small cysteine-rich protein (omcA) and the large cysteine-rich periplasmic protein (omcB). Post-translationally, N-terminal amide-linked and S-diacylglycerol cysteine-linked to 16:0, 18:0, 15:0 branched, and 17:0 branched fatty acids (ratio 6:5:3:4) in the EB stage. The exact distribution of fatty acids has not been determined. In terms of processing, the N-terminus is blocked.

It localises to the cell outer membrane. In elementary bodies (EBs, the infectious stage, which is able to survive outside the host cell) provides the structural integrity of the outer envelope through disulfide cross-links with the large cysteine-rich periplasmic protein and the major outer membrane porin. It has been described in publications as the Sarkosyl-insoluble COMC (Chlamydia outer membrane complex), and serves as the functional equivalent of peptidoglycan. This is Small cysteine-rich outer membrane protein omcA (omcA) from Chlamydia psittaci (Chlamydophila psittaci).